A 390-amino-acid polypeptide reads, in one-letter code: DNA polymerase IV (390 aa).

Residues 6 to 187 (VMHVDLDAFF…LDIAVMPGIG (182 aa)) form the UmuC domain. Mg(2+) is bound by residues D10 and D105. The active site involves E106.

The protein belongs to the DNA polymerase type-Y family. In terms of assembly, monomer. Requires Mg(2+) as cofactor.

The protein resides in the cytoplasm. The catalysed reaction is DNA(n) + a 2'-deoxyribonucleoside 5'-triphosphate = DNA(n+1) + diphosphate. Functionally, poorly processive, error-prone DNA polymerase involved in untargeted mutagenesis. Copies undamaged DNA at stalled replication forks, which arise in vivo from mismatched or misaligned primer ends. These misaligned primers can be extended by PolIV. Exhibits no 3'-5' exonuclease (proofreading) activity. May be involved in translesional synthesis, in conjunction with the beta clamp from PolIII. This chain is DNA polymerase IV, found in Dehalococcoides mccartyi (strain CBDB1).